The primary structure comprises 591 residues: Putative BTB/POZ domain-containing protein At5g13600 (591 aa).

A BTB domain is found at P28–P95. Residues N208 to R493 enclose the NPH3 domain. Position 434 is a phosphotyrosine (Y434).

This sequence belongs to the NPH3 family.

It participates in protein modification; protein ubiquitination. Its function is as follows. May act as a substrate-specific adapter of an E3 ubiquitin-protein ligase complex (CUL3-RBX1-BTB) which mediates the ubiquitination and subsequent proteasomal degradation of target proteins. In Arabidopsis thaliana (Mouse-ear cress), this protein is Putative BTB/POZ domain-containing protein At5g13600.